Reading from the N-terminus, the 286-residue chain is Glycine--tRNA ligase alpha subunit (286 aa).

It belongs to the class-II aminoacyl-tRNA synthetase family. In terms of assembly, tetramer of two alpha and two beta subunits.

Its subcellular location is the cytoplasm. The catalysed reaction is tRNA(Gly) + glycine + ATP = glycyl-tRNA(Gly) + AMP + diphosphate. The sequence is that of Glycine--tRNA ligase alpha subunit from Campylobacter lari (strain RM2100 / D67 / ATCC BAA-1060).